Consider the following 573-residue polypeptide: 2-succinyl-5-enolpyruvyl-6-hydroxy-3-cyclohexene-1-carboxylate synthase (573 aa).

It belongs to the TPP enzyme family. MenD subfamily. In terms of assembly, homodimer. Mg(2+) serves as cofactor. Mn(2+) is required as a cofactor. It depends on thiamine diphosphate as a cofactor.

The catalysed reaction is isochorismate + 2-oxoglutarate + H(+) = 5-enolpyruvoyl-6-hydroxy-2-succinyl-cyclohex-3-ene-1-carboxylate + CO2. It functions in the pathway quinol/quinone metabolism; 1,4-dihydroxy-2-naphthoate biosynthesis; 1,4-dihydroxy-2-naphthoate from chorismate: step 2/7. The protein operates within quinol/quinone metabolism; menaquinone biosynthesis. Catalyzes the thiamine diphosphate-dependent decarboxylation of 2-oxoglutarate and the subsequent addition of the resulting succinic semialdehyde-thiamine pyrophosphate anion to isochorismate to yield 2-succinyl-5-enolpyruvyl-6-hydroxy-3-cyclohexene-1-carboxylate (SEPHCHC). The polypeptide is 2-succinyl-5-enolpyruvyl-6-hydroxy-3-cyclohexene-1-carboxylate synthase (Shewanella sp. (strain MR-4)).